An 891-amino-acid chain; its full sequence is Mating-type protein A-alpha Y1 (891 aa).

Positions 146 to 205 form a DNA-binding region, homeobox; sequence SKKPRPKFHSEYTPLLELYFRFNAYPTYADRRVLAEKTGMLTRQITVWFQNHRRRAKGPL. 5 disordered regions span residues 241–291, 319–339, 393–437, 610–718, and 800–822; these read PITL…PSTL, DIEM…LPKG, TRKP…RRVS, ARRK…EQSL, and MNWT…GGDE. Over residues 244–257 the composition is skewed to polar residues; that stretch reads LGNNKTPDLTTSSR. Basic residues predominate over residues 328-337; that stretch reads PKRRKMKKLP. Residues 427-437 show a composition bias toward low complexity; the sequence is ASSTVPSRRVS. The span at 627-638 shows a compositional bias: basic residues; it reads KKDKKERKKAGL. 2 stretches are compositionally biased toward low complexity: residues 651–667 and 676–710; these read VSSR…TSAR and QPSS…SMPS. Positions 800-818 are enriched in polar residues; the sequence is MNWTASVGSNAQDPASQES.

The protein resides in the nucleus. In terms of biological role, specifies A-alpha-1 mating-type. May regulate the expression of genes specific to the homokaryotic cell type. The sequence is that of Mating-type protein A-alpha Y1 from Schizophyllum commune (Split gill fungus).